Here is a 138-residue protein sequence, read N- to C-terminus: Putative pre-16S rRNA nuclease (138 aa).

It belongs to the YqgF nuclease family.

It is found in the cytoplasm. Its function is as follows. Could be a nuclease involved in processing of the 5'-end of pre-16S rRNA. The protein is Putative pre-16S rRNA nuclease of Bacillus pumilus (strain SAFR-032).